We begin with the raw amino-acid sequence, 508 residues long: MWELVALLLLTLAYLFWPKRRCPGAKYPKSLLSLPLVGSLPFLPRHGHMHNNFFKLQKKYGPIYSVRMGTKTTVIVGHHQLAKEVLIKKGKDFSGRPQMATLDIASNNRKGIAFADSGAHWQLHRRLAMATFALFKDGDQKLEKIICQEISTLCDMLATHNGQSIDISFPVFVAVTNVISLICFNTSYKNGDPELNVIQNYNEGIIDNLSKDSLVDLVPWLKIFPNKTLEKLKSHVKIRNDLLNKILENYKEKFRSDSITNMLDTLMQAKMNSDNGNAGPDQDSELLSDNHILTTIGDIFGAGVETTTSVVKWTLAFLLHNPQVKKKLYEEIDQNVGFSRTPTISDRNRLLLLEATIREVLRLRPVAPMLIPHKANVDSSIGEFAVDKGTEVIINLWALHHNEKEWHQPDQFMPERFLNPAGTQLISPSVSYLPFGAGPRSCIGEILARQELFLIMAWLLQRFDLEVPDDGQLPSLEGIPKVVFLIDSFKVKIKVRQAWREAQAEGST.

Asn-202 provides a ligand contact to substrate. Residue Cys-442 participates in heme binding.

It belongs to the cytochrome P450 family. Requires heme as cofactor. Phosphorylation is necessary for 17,20-lyase, but not for 17-alpha-hydroxylase activity.

The protein localises to the endoplasmic reticulum membrane. It localises to the microsome membrane. It catalyses the reaction a C21-steroid + reduced [NADPH--hemoprotein reductase] + O2 = a 17alpha-hydroxy-C21-steroid + oxidized [NADPH--hemoprotein reductase] + H2O + H(+). The enzyme catalyses progesterone + reduced [NADPH--hemoprotein reductase] + O2 = 17alpha-hydroxyprogesterone + oxidized [NADPH--hemoprotein reductase] + H2O + H(+). It carries out the reaction pregnenolone + reduced [NADPH--hemoprotein reductase] + O2 = 17alpha-hydroxypregnenolone + oxidized [NADPH--hemoprotein reductase] + H2O + H(+). The catalysed reaction is 17alpha-hydroxyprogesterone + reduced [NADPH--hemoprotein reductase] + O2 = androst-4-ene-3,17-dione + acetate + oxidized [NADPH--hemoprotein reductase] + H2O + 2 H(+). It catalyses the reaction 17alpha-hydroxyprogesterone + reduced [NADPH--hemoprotein reductase] + O2 = 16alpha,17alpha-dihydroxyprogesterone + oxidized [NADPH--hemoprotein reductase] + H2O + H(+). The enzyme catalyses 16alpha,17alpha-dihydroxyprogesterone + reduced [NADPH--hemoprotein reductase] + O2 = 6beta,16alpha,17alpha-trihydroxyprogesterone + oxidized [NADPH--hemoprotein reductase] + H2O + H(+). It carries out the reaction 17alpha-hydroxypregnenolone + reduced [NADPH--hemoprotein reductase] + O2 = 3beta-hydroxyandrost-5-en-17-one + acetate + oxidized [NADPH--hemoprotein reductase] + H2O + 2 H(+). The catalysed reaction is 16alpha,17alpha-dihydroxypregnenolone + reduced [NADPH--hemoprotein reductase] + O2 = 3beta,16alpha-dihydroxy-androst-5-en-17-one + acetate + oxidized [NADPH--hemoprotein reductase] + H2O + 2 H(+). It catalyses the reaction 3beta-hydroxyandrost-5-en-17-one + reduced [NADPH--hemoprotein reductase] + O2 = 3beta,16alpha-dihydroxy-androst-5-en-17-one + oxidized [NADPH--hemoprotein reductase] + H2O + H(+). The enzyme catalyses androst-4-ene-3,17-dione + reduced [NADPH--hemoprotein reductase] + O2 = 16alpha-hydroxyandrost-4-ene-3,17-dione + oxidized [NADPH--hemoprotein reductase] + H2O + H(+). Its pathway is steroid hormone biosynthesis. It participates in steroid biosynthesis; glucocorticoid biosynthesis. With respect to regulation, regulated predominantly by intracellular cAMP levels. The 17,20-lyase activity is stimulated by cytochrome b5, which acts as an allosteric effector increasing the Vmax of the lyase activity. A cytochrome P450 monooxygenase involved in corticoid and androgen biosynthesis. Catalyzes 17-alpha hydroxylation of C21 steroids, which is common for both pathways. A second oxidative step, required only for androgen synthesis, involves an acyl-carbon cleavage. The 17-alpha hydroxy intermediates, as part of adrenal glucocorticoids biosynthesis pathway, are precursors of cortisol. Hydroxylates steroid hormones, pregnenolone and progesterone to form 17-alpha hydroxy metabolites, followed by the cleavage of the C17-C20 bond to form C19 steroids, dehydroepiandrosterone (DHEA) and androstenedione. Has 16-alpha hydroxylase activity. Catalyzes 16-alpha hydroxylation of 17-alpha hydroxy pregnenolone, followed by the cleavage of the C17-C20 bond to form 16-alpha-hydroxy DHEA. Also 16-alpha hydroxylates androgens, relevant for estriol synthesis. Mechanistically, uses molecular oxygen inserting one oxygen atom into a substrate, and reducing the second into a water molecule, with two electrons provided by NADPH via cytochrome P450 reductase (CPR; NADPH-ferrihemoprotein reductase). This Homo sapiens (Human) protein is Steroid 17-alpha-hydroxylase/17,20 lyase.